The chain runs to 169 residues: Peptide methionine sulfoxide reductase MsrA (169 aa).

The active site involves Cys-10.

It belongs to the MsrA Met sulfoxide reductase family.

The enzyme catalyses L-methionyl-[protein] + [thioredoxin]-disulfide + H2O = L-methionyl-(S)-S-oxide-[protein] + [thioredoxin]-dithiol. It carries out the reaction [thioredoxin]-disulfide + L-methionine + H2O = L-methionine (S)-S-oxide + [thioredoxin]-dithiol. Its function is as follows. Has an important function as a repair enzyme for proteins that have been inactivated by oxidation. Catalyzes the reversible oxidation-reduction of methionine sulfoxide in proteins to methionine. This is Peptide methionine sulfoxide reductase MsrA from Streptococcus equi subsp. equi (strain 4047).